Consider the following 423-residue polypeptide: MALLQSRLLLSAPRRAAATARASSWWSHVEMGPPDPILGVTEAFKRDTNSKKMNLGVGAYRDDNGKSYVLNCVRKAEAMIAAKKMDKEYLPIAGLADFTRASAELALGENSEAFKSGRYVTVQGISGTGSLRVGANFLQRFFKFSRDVYLPKPSWGNHTPIFRDAGLQLQAYRYYDPKTCSLDFTGAMEDISKIPEKSIILLHACAHNPTGVDPRQEQWKELASVVKKRNLLAYFDMAYQGFASGDINRDAWALRHFIEQGIDVVLSQSYAKNMGLYGERAGAFTVICRDAEEAKRVESQLKILIRPMYSNPPMNGARIASLILNTPELRKEWLVEVKGMADRIISMRTQLVSNLKKEGSSHNWQHITDQIGMFCFTGLKPEQVERLTKEFSIYMTKDGRISVAGVASSNVGYLAHAIHQVTK.

The transit peptide at 1-22 directs the protein to the mitochondrion; that stretch reads MALLQSRLLLSAPRRAAATARA. Positions 58, 155, and 208 each coordinate substrate. Residue Lys-272 is modified to N6-(pyridoxal phosphate)lysine. Arg-400 is a substrate binding site.

The protein belongs to the class-I pyridoxal-phosphate-dependent aminotransferase family. Homodimer. It depends on pyridoxal 5'-phosphate as a cofactor. Detected in heart (at protein level).

It localises to the mitochondrion matrix. The catalysed reaction is L-aspartate + 2-oxoglutarate = oxaloacetate + L-glutamate. The enzyme catalyses L-kynurenine + 2-oxoglutarate = kynurenate + L-glutamate + H2O. Functionally, catalyzes the irreversible transamination of the L-tryptophan metabolite L-kynurenine to form kynurenic acid (KA). As a member of the malate-aspartate shuttle, it has a key role in the intracellular NAD(H) redox balance. Is important for metabolite exchange between mitochondria and cytosol, and for amino acid metabolism. The polypeptide is Aspartate aminotransferase, mitochondrial (GOT2) (Gallus gallus (Chicken)).